The following is a 384-amino-acid chain: Probable protein phosphatase 2C 48 (384 aa).

One can recognise a PPM-type phosphatase domain in the interval 47 to 358 (ITGEFSMAVV…DDITVIVVFL (312 aa)). Residue S78 is modified to Phosphoserine. Residues D89, G90, D290, and D349 each contribute to the Mn(2+) site.

The protein belongs to the PP2C family. It depends on Mg(2+) as a cofactor. Mn(2+) is required as a cofactor.

The enzyme catalyses O-phospho-L-seryl-[protein] + H2O = L-seryl-[protein] + phosphate. It catalyses the reaction O-phospho-L-threonyl-[protein] + H2O = L-threonyl-[protein] + phosphate. May dephosphorylate and repress plasma membrane H(+)-ATPases (PM H(+)-ATPases, e.g. AHA1 and AHA2), thus influencing negatively plant growth and fitness. This is Probable protein phosphatase 2C 48 from Arabidopsis thaliana (Mouse-ear cress).